The sequence spans 357 residues: Peptide chain release factor 1 (357 aa).

At Q234 the chain carries N5-methylglutamine.

This sequence belongs to the prokaryotic/mitochondrial release factor family. In terms of processing, methylated by PrmC. Methylation increases the termination efficiency of RF1.

Its subcellular location is the cytoplasm. In terms of biological role, peptide chain release factor 1 directs the termination of translation in response to the peptide chain termination codons UAG and UAA. The sequence is that of Peptide chain release factor 1 from Nocardioides sp. (strain ATCC BAA-499 / JS614).